Consider the following 338-residue polypeptide: Fructose-1,6-bisphosphatase class 1 (338 aa).

Glu92, Asp114, Leu116, and Asp117 together coordinate Mg(2+). Residues 117 to 120 (DGSS), Asn210, Tyr243, and Lys276 each bind substrate. A Mg(2+)-binding site is contributed by Glu282.

This sequence belongs to the FBPase class 1 family. Homotetramer. The cofactor is Mg(2+).

The protein resides in the cytoplasm. The enzyme catalyses beta-D-fructose 1,6-bisphosphate + H2O = beta-D-fructose 6-phosphate + phosphate. Its pathway is carbohydrate biosynthesis; gluconeogenesis. The polypeptide is Fructose-1,6-bisphosphatase class 1 (Maridesulfovibrio salexigens (strain ATCC 14822 / DSM 2638 / NCIMB 8403 / VKM B-1763) (Desulfovibrio salexigens)).